A 316-amino-acid polypeptide reads, in one-letter code: tRNA dimethylallyltransferase (316 aa).

17-24 (GPTASGKT) is a binding site for ATP. 19 to 24 (TASGKT) serves as a coordination point for substrate. Interaction with substrate tRNA regions lie at residues 42–45 (DSAL), 166–170 (QRLSR), 247–252 (RCVGYR), and 280–287 (KRQITWLR).

The protein belongs to the IPP transferase family. As to quaternary structure, monomer. The cofactor is Mg(2+).

It catalyses the reaction adenosine(37) in tRNA + dimethylallyl diphosphate = N(6)-dimethylallyladenosine(37) in tRNA + diphosphate. Catalyzes the transfer of a dimethylallyl group onto the adenine at position 37 in tRNAs that read codons beginning with uridine, leading to the formation of N6-(dimethylallyl)adenosine (i(6)A). This Enterobacter sp. (strain 638) protein is tRNA dimethylallyltransferase.